The sequence spans 279 residues: Lectin 9 (279 aa).

Positions 1–23 (MALSSALIKIFITFLFLQNHVNS) are cleaved as a signal peptide. Residues N116, N139, N235, and N272 are each glycosylated (N-linked (GlcNAc...) asparagine).

It belongs to the leguminous lectin family.

Functionally, may be involved in arbuscular mycorrhizal (AM) symbiosis with AM fungi. The chain is Lectin 9 from Medicago truncatula (Barrel medic).